Here is a 562-residue protein sequence, read N- to C-terminus: NAD-dependent malic enzyme (562 aa).

The Proton donor role is filled by Tyr101. NAD(+) is bound at residue Arg154. Catalysis depends on Lys172, which acts as the Proton acceptor. 3 residues coordinate a divalent metal cation: Glu243, Asp244, and Asp267. Asp267 and Asn415 together coordinate NAD(+).

It belongs to the malic enzymes family. In terms of assembly, homotetramer. The cofactor is Mg(2+). Mn(2+) is required as a cofactor.

The enzyme catalyses (S)-malate + NAD(+) = pyruvate + CO2 + NADH. The catalysed reaction is oxaloacetate + H(+) = pyruvate + CO2. In Shewanella halifaxensis (strain HAW-EB4), this protein is NAD-dependent malic enzyme.